Reading from the N-terminus, the 131-residue chain is D-ribose pyranase (131 aa).

His-20 acts as the Proton donor in catalysis. Residues Asp-28, His-98, and 120-122 (FSN) each bind substrate.

It belongs to the RbsD / FucU family. RbsD subfamily. Homodecamer.

It localises to the cytoplasm. The enzyme catalyses beta-D-ribopyranose = beta-D-ribofuranose. It participates in carbohydrate metabolism; D-ribose degradation; D-ribose 5-phosphate from beta-D-ribopyranose: step 1/2. Its function is as follows. Catalyzes the interconversion of beta-pyran and beta-furan forms of D-ribose. The sequence is that of D-ribose pyranase from Levilactobacillus brevis (strain ATCC 367 / BCRC 12310 / CIP 105137 / JCM 1170 / LMG 11437 / NCIMB 947 / NCTC 947) (Lactobacillus brevis).